The primary structure comprises 1177 residues: MIDNKVSVCSVGKVVITEVATFASHPLYIDRKTALTMIRSTRAASRLRLGARYYASHAPYGVLSEHLKRTPRTNSQHYYPPPQGAHDLPKVSSMGDSIASIVRGRELWVQEKDKSDKPEKSDKPDKTDKTDKDKPEKQDKDKTDKPEKTKVSHTPSSTASTGAGEAAAPPSAPPSGSGSSSSSGGGSPPAKKKKSPAQTYPEILAVPISDRPLLPGFHRALVIRDPNVMKAIDEMITRGEPYLACFFLKEFSNADVIQDASEVHDIGVIAEIQIQSQDHKRSTVDASNEPVYVLILYPHKRVRLNSLKNPPSSGGAVSYASVSEDVAEDGELLLTSKDLEGYSEEFLEAREEAKKAKSGKTEDSKHDSKVTSKDGKETTEKYDSSTLQESPYSFLSTYDVSTAAISLIEDKPHDKNNRVITTLTNEILNVFKMLRAEDATLREQLSSVVGDILRTEPAVLQEPGRLADFAAALCAGEGKEIQAVLTALDLETRLNRALILLKREHTNAKLQQKIARDVENKLNSKHKKFLLTEQMKAIKKELGVDDGKEKLVEKFNERAEKLDMPENIQKVFEEEMTRLQSMEPSSSEYSVTRNYLDWITQIPWNKTTEDRFNLPQAKDVLDSEHYGMKEVKDRILEFIAVSRMKGGLTGKILLLQGPPGVGKTSIGKSIAKALNRQFYRFSVGGTNDASEVKGHRRTYVGAIPGRLVQALKQTQTENPLILIDEIDKLSSSRTQGDPGAALLEALDPEQNNAFLDHYLDVPIDLSKVLFVCTSNDLSTIPWPLLDRMEVIEMSGYVPDEKLNIANQYLVPQSKKETGLENVNVQVTDDAINALNRQYCRESGVRNLKKHIEKIFRKVVVKIVGEYGQDEVAAEKIIDVEPVEKDKESAEKKTTKSKSKEVNEEPAAKEEKDKATESAESSETKVGTKAPPVTVPEDYSLTIDEKDLYDYVNSPPYSSDRMFEDPPPGVVMGLAYSPLGGSALYIECILDGGLSADSSARLSSTGNLGNVMKESTNIAYSFAKSFMIRNFPANRFFERAGIHLHCPAGAISKDGPSAGCAVVTGLLSLALNHPIDSSISMTGEISLTGKVMKIGGLREKAVGAHSAGAKTIIIPKDNSGDWDELPDTVKEGLTPVFAGTYQDVYDVVFQGLDTKVAAEVWKKQFDLIDRKLDKRGSK.

Disordered regions lie at residues 72-197 and 353-386; these read RTNS…KSPA and AKKA…DSST. Basic and acidic residues predominate over residues 103 to 150; the sequence is RGRELWVQEKDKSDKPEKSDKPDKTDKTDKDKPEKQDKDKTDKPEKTK. A compositionally biased stretch (low complexity) spans 154 to 182; the sequence is TPSSTASTGAGEAAAPPSAPPSGSGSSSS. In terms of domain architecture, Lon N-terminal spans 203-505; that stretch reads ILAVPISDRP…RALILLKREH (303 aa). Residues 353–383 show a composition bias toward basic and acidic residues; that stretch reads AKKAKSGKTEDSKHDSKVTSKDGKETTEKYD. 657–664 is a binding site for ATP; it reads GPPGVGKT. Positions 883-916 are enriched in basic and acidic residues; that stretch reads EKDKESAEKKTTKSKSKEVNEEPAAKEEKDKATE. Positions 883–932 are disordered; that stretch reads EKDKESAEKKTTKSKSKEVNEEPAAKEEKDKATESAESSETKVGTKAPPV. Residues 964–1150 enclose the Lon proteolytic domain; it reads DPPPGVVMGL…QDVYDVVFQG (187 aa). Active-site residues include serine 1056 and lysine 1099.

The protein belongs to the peptidase S16 family. In terms of assembly, homohexamer or homoheptamer. Organized in a ring with a central cavity.

It localises to the mitochondrion matrix. The enzyme catalyses Hydrolysis of proteins in presence of ATP.. In terms of biological role, ATP-dependent serine protease that mediates the selective degradation of misfolded, unassembled or oxidatively damaged polypeptides as well as certain short-lived regulatory proteins in the mitochondrial matrix. May also have a chaperone function in the assembly of inner membrane protein complexes. Participates in the regulation of mitochondrial gene expression and in the maintenance of the integrity of the mitochondrial genome. Binds to mitochondrial DNA in a site-specific manner. The chain is Lon protease homolog, mitochondrial from Yarrowia lipolytica (strain CLIB 122 / E 150) (Yeast).